We begin with the raw amino-acid sequence, 207 residues long: DNA protection during starvation protein 1 (207 aa).

The span at 1–12 (MTKKSTKSEAAS) shows a compositional bias: basic and acidic residues. A disordered region spans residues 1-31 (MTKKSTKSEAASKTKKSGVPETGAQGVRAGG). Positions 83, 110, and 114 each coordinate Fe cation.

This sequence belongs to the Dps family. In terms of assembly, the 12 subunits form a hollow sphere into which the mineral iron core of up to 500 Fe(3+) can be deposited. The homododecameric forms at higher concentration of salt, the homodimeric form under reducing, low-salt conditions. The assembly of the dodecamer is irreversible.

The protein localises to the cytoplasm. Its subcellular location is the nucleoid. The catalysed reaction is 2 Fe(2+) + H2O2 + 2 H(+) = 2 Fe(3+) + 2 H2O. Its function is as follows. Protects DNA from oxidative damage by sequestering intracellular Fe(2+) ion and storing it in the form of Fe(3+) oxyhydroxide mineral. One hydrogen peroxide oxidizes two Fe(2+) ions, which prevents hydroxyl radical production by the Fenton reaction. Both oligomeric forms of dps exhibit ferroxidase activity and DNA binding. Dodecameric dps is capable of Fe(2+) oxidation/mineralization. Only dimeric dps affords efficient DNA protection against hydroxyl radical-mediated cleavage. This chain is DNA protection during starvation protein 1 (dps1), found in Deinococcus radiodurans (strain ATCC 13939 / DSM 20539 / JCM 16871 / CCUG 27074 / LMG 4051 / NBRC 15346 / NCIMB 9279 / VKM B-1422 / R1).